We begin with the raw amino-acid sequence, 149 residues long: D-aminoacyl-tRNA deacylase (149 aa).

Positions 141-142 match the Gly-cisPro motif, important for rejection of L-amino acids motif; that stretch reads GP.

Belongs to the DTD family. Homodimer.

It is found in the cytoplasm. It carries out the reaction glycyl-tRNA(Ala) + H2O = tRNA(Ala) + glycine + H(+). The enzyme catalyses a D-aminoacyl-tRNA + H2O = a tRNA + a D-alpha-amino acid + H(+). Its function is as follows. An aminoacyl-tRNA editing enzyme that deacylates mischarged D-aminoacyl-tRNAs. Also deacylates mischarged glycyl-tRNA(Ala), protecting cells against glycine mischarging by AlaRS. Acts via tRNA-based rather than protein-based catalysis; rejects L-amino acids rather than detecting D-amino acids in the active site. By recycling D-aminoacyl-tRNA to D-amino acids and free tRNA molecules, this enzyme counteracts the toxicity associated with the formation of D-aminoacyl-tRNA entities in vivo and helps enforce protein L-homochirality. The chain is D-aminoacyl-tRNA deacylase from Hydrogenovibrio crunogenus (strain DSM 25203 / XCL-2) (Thiomicrospira crunogena).